The sequence spans 265 residues: MRIGRIASPDGVAFASIDGELGEPSEMTAREIAEHPFGTPTFTGRSWPLADVRLLAPILASKVVCVGKNYADHIAEMGGRPPADPVIFLKPNTAIIGPNTPIRLPANASPVHFEGELAIVIGRACKDVPAAQAVDNILGYTIGNDVSARDQQQSDGQWTRAKGHDTFCPVGPWIVTDLAPFDPADLELRTVVNGDVKQHARTSLMIHDIGAIVEWISAIMTLLPGDLILTGTPAGVGPIEDGDTVSITIEGIGTLTNPVVRKGKP.

Residues Glu114, Glu116, and Asp145 each contribute to the a divalent metal cation site.

It in the C-terminal section; belongs to the FAH family. The cofactor is a divalent metal cation.

The chain is Protein Rv2993c from Mycobacterium tuberculosis (strain ATCC 25618 / H37Rv).